A 175-amino-acid chain; its full sequence is Albumin-1 (175 aa).

A disulfide bridge links Cys-135 with Cys-141.

Belongs to the protease inhibitor I3 (leguminous Kunitz-type inhibitor) family.

2S seed storage protein. In Psophocarpus tetragonolobus (Winged bean), this protein is Albumin-1.